Consider the following 359-residue polypeptide: 3-isopropylmalate dehydrogenase (359 aa).

Residue 77–88 (GPKWGTGDVRPE) participates in NAD(+) binding. Substrate contacts are provided by arginine 95, arginine 105, arginine 134, and aspartate 223. The Mg(2+) site is built by aspartate 223, aspartate 248, and aspartate 252. Position 287–298 (287–298 (GSAPDLPAGKVN)) interacts with NAD(+).

Belongs to the isocitrate and isopropylmalate dehydrogenases family. In terms of assembly, homodimer. Mg(2+) serves as cofactor. Mn(2+) is required as a cofactor.

The protein localises to the cytoplasm. It catalyses the reaction (2R,3S)-3-isopropylmalate + NAD(+) = 4-methyl-2-oxopentanoate + CO2 + NADH. It functions in the pathway amino-acid biosynthesis; L-leucine biosynthesis; L-leucine from 3-methyl-2-oxobutanoate: step 3/4. Functionally, catalyzes the oxidation of 3-carboxy-2-hydroxy-4-methylpentanoate (3-isopropylmalate) to 3-carboxy-4-methyl-2-oxopentanoate. The product decarboxylates to 4-methyl-2 oxopentanoate. This is 3-isopropylmalate dehydrogenase (LEU2) from Diutina rugosa (Yeast).